The primary structure comprises 428 residues: Histidinol dehydrogenase (428 aa).

Positions 127, 185, and 208 each coordinate NAD(+). Residues Ser-232, Gln-254, and His-257 each contribute to the substrate site. Residues Gln-254 and His-257 each coordinate Zn(2+). Active-site proton acceptor residues include Glu-321 and His-322. Substrate is bound by residues His-322, Asp-355, Glu-409, and His-414. Zn(2+) is bound at residue Asp-355. Zn(2+) is bound at residue His-414.

Belongs to the histidinol dehydrogenase family. It depends on Zn(2+) as a cofactor.

The enzyme catalyses L-histidinol + 2 NAD(+) + H2O = L-histidine + 2 NADH + 3 H(+). It participates in amino-acid biosynthesis; L-histidine biosynthesis; L-histidine from 5-phospho-alpha-D-ribose 1-diphosphate: step 9/9. Catalyzes the sequential NAD-dependent oxidations of L-histidinol to L-histidinaldehyde and then to L-histidine. This chain is Histidinol dehydrogenase, found in Pasteurella multocida (strain Pm70).